A 299-amino-acid chain; its full sequence is Acetaldehyde dehydrogenase (299 aa).

NAD(+) is bound at residue 11–14 (SGNI). Residue Cys126 is the Acyl-thioester intermediate of the active site. Residues 157-165 (SAGPGTRAN) and Asn267 each bind NAD(+).

It belongs to the acetaldehyde dehydrogenase family.

It catalyses the reaction acetaldehyde + NAD(+) + CoA = acetyl-CoA + NADH + H(+). The sequence is that of Acetaldehyde dehydrogenase from Bacillus thuringiensis (strain Al Hakam).